The primary structure comprises 122 residues: SLVQFEKMIKEETGKNAVPFYAFYGCYCGWGGRGRPKDATDRCCIVHDCCYEKLVKCNTKWDFYRYSLRSGYFQCGKGTWCEQQICECDRVAAECLRRSLSTYRYGKMIYPDSRCREPSETC.

Intrachain disulfides connect Cys-26/Cys-115, Cys-28/Cys-44, Cys-43/Cys-95, Cys-49/Cys-122, Cys-50/Cys-88, Cys-57/Cys-81, and Cys-75/Cys-86. Residues Tyr-27, Gly-29, and Gly-31 each coordinate Ca(2+). His-47 is a catalytic residue. Asp-48 serves as a coordination point for Ca(2+). Asp-89 is a catalytic residue.

Ca(2+) serves as cofactor. In terms of tissue distribution, expressed by the venom gland.

The protein localises to the secreted. It catalyses the reaction a 1,2-diacyl-sn-glycero-3-phosphocholine + H2O = a 1-acyl-sn-glycero-3-phosphocholine + a fatty acid + H(+). Functionally, snake venom phospholipase A2 (PLA2) that induces myonecrosis and edema upon subcutaneous injections in mice. In vitro, causes a potent blockade of neuromuscular transmission in young chicken biventer cervicis preparation and produces cytotoxicity in murine C2C12 skeletal muscle myotubes and lack cytolytic activity upon myoblasts in vitro. PLA2 catalyzes the calcium-dependent hydrolysis of the 2-acyl groups in 3-sn-phosphoglycerides. The protein is Basic phospholipase A2 Cdr-13 of Crotalus durissus ruruima (South American rattlesnake).